The chain runs to 138 residues: MRLLHTMLRVGNLEKSLDFYQNVLGMKLLRRKDYPEGRFTLAFVGYGDETDSTVLELTHNWDTERYDLGNAYGHIAVEVDDAYEACERVKRQGGNVVREAGPMKHGTTVIAFVEDPDGYKIEFIQKKSGDDSVAYQTA.

In terms of domain architecture, VOC spans 2–126 (RLLHTMLRVG…DGYKIEFIQK (125 aa)). Histidine 5 is a binding site for Ni(2+). Arginine 9 is a binding site for substrate. Glutamate 56 provides a ligand contact to Ni(2+). Residues asparagine 60 and histidine 74 each coordinate substrate. Residues histidine 74 and glutamate 122 each contribute to the Ni(2+) site. The Proton donor/acceptor role is filled by glutamate 122.

Belongs to the glyoxalase I family. The cofactor is Ni(2+).

The catalysed reaction is (R)-S-lactoylglutathione = methylglyoxal + glutathione. It participates in secondary metabolite metabolism; methylglyoxal degradation; (R)-lactate from methylglyoxal: step 1/2. In terms of biological role, catalyzes the conversion of hemimercaptal, formed from methylglyoxal and glutathione, to S-lactoylglutathione. The chain is Lactoylglutathione lyase (gloA) from Neisseria meningitidis serogroup A / serotype 4A (strain DSM 15465 / Z2491).